The following is a 44-amino-acid chain: MDSIATNTHSSSIVNAYNNNPTDVVKTQNIKNYTPKVPYMCVIA.

Residues 1-32 (MDSIATNTHSSSIVNAYNNNPTDVVKTQNIKN) constitute a propeptide that is removed on maturation. The residue at position 41 (C41) is a Cysteine methyl ester. C41 carries the S-farnesyl cysteine lipid modification. A propeptide spans 42–44 (VIA) (removed in mature form).

It is found in the secreted. M-factor is a mating pheromone produced by M-type mating cells. All three mfm genes contribute to the production of M-factor. In Schizosaccharomyces pombe (strain 972 / ATCC 24843) (Fission yeast), this protein is M-factor (mfm2).